Reading from the N-terminus, the 544-residue chain is Methionine--tRNA ligase (544 aa).

Residues 10-20 (PYANGSLHLGH) carry the 'HIGH' region motif. Residues cysteine 141, cysteine 144, cysteine 153, and cysteine 156 each contribute to the Zn(2+) site. Residues 329–333 (KLSTS) carry the 'KMSKS' region motif. Threonine 332 provides a ligand contact to ATP.

Belongs to the class-I aminoacyl-tRNA synthetase family. MetG type 1 subfamily. Monomer. Zn(2+) is required as a cofactor.

The protein resides in the cytoplasm. The catalysed reaction is tRNA(Met) + L-methionine + ATP = L-methionyl-tRNA(Met) + AMP + diphosphate. In terms of biological role, is required not only for elongation of protein synthesis but also for the initiation of all mRNA translation through initiator tRNA(fMet) aminoacylation. The sequence is that of Methionine--tRNA ligase from Bacillus cereus (strain G9842).